Consider the following 197-residue polypeptide: MEAFRTHTGIGVPLRRSNVDTDQIIPAVYLKRVTRTGFEDGLFAAWRNDPSFVLNLAPFDKGSVLVAGPDFGTGSSREHAVWALMDFGFRVVISSRFADIFRGNAGKAGLLAAEVSQDDVELLWKLIEQHPGTEITVNLQDRTITAGTMMVLFNIDDYTAWRLLEGLDDIGLTLRKLDEIEDYERHRPEWKPHTLPA.

It belongs to the LeuD family. LeuD type 1 subfamily. Heterodimer of LeuC and LeuD.

The catalysed reaction is (2R,3S)-3-isopropylmalate = (2S)-2-isopropylmalate. The protein operates within amino-acid biosynthesis; L-leucine biosynthesis; L-leucine from 3-methyl-2-oxobutanoate: step 2/4. Its function is as follows. Catalyzes the isomerization between 2-isopropylmalate and 3-isopropylmalate, via the formation of 2-isopropylmaleate. The polypeptide is 3-isopropylmalate dehydratase small subunit (Mycolicibacterium vanbaalenii (strain DSM 7251 / JCM 13017 / BCRC 16820 / KCTC 9966 / NRRL B-24157 / PYR-1) (Mycobacterium vanbaalenii)).